The sequence spans 124 residues: Protein CYSTEINE-RICH TRANSMEMBRANE MODULE 10 (124 aa).

The segment at 1-103 (MSYQDPQHPV…PKNKKDKKDS (103 aa)) is disordered. Pro residues-rich tracts occupy residues 27-40 (AGYP…PPQY) and 65-88 (GYPP…PPPH). A helical transmembrane segment spans residues 101 to 118 (KDSGGFMEGCLAMLCCCV).

The protein belongs to the CYSTM1 family. Heterodimers. Interacts with CYSTM7 and WIH1/CYSTM13. Mostly expressed in stems and,at low levels, in stems, roots, flowers, siliques and leaves.

Its subcellular location is the cell membrane. The protein localises to the cytoplasm. In terms of biological role, involved in resistance to abiotic stress. In Arabidopsis thaliana (Mouse-ear cress), this protein is Protein CYSTEINE-RICH TRANSMEMBRANE MODULE 10.